Consider the following 120-residue polypeptide: Large ribosomal subunit protein uL18 (120 aa).

This sequence belongs to the universal ribosomal protein uL18 family. Part of the 50S ribosomal subunit; part of the 5S rRNA/L5/L18/L25 subcomplex. Contacts the 5S and 23S rRNAs.

Its function is as follows. This is one of the proteins that bind and probably mediate the attachment of the 5S RNA into the large ribosomal subunit, where it forms part of the central protuberance. This Allorhizobium ampelinum (strain ATCC BAA-846 / DSM 112012 / S4) (Agrobacterium vitis (strain S4)) protein is Large ribosomal subunit protein uL18.